A 236-amino-acid chain; its full sequence is Small ribosomal subunit protein uS2c (236 aa).

It belongs to the universal ribosomal protein uS2 family.

It localises to the plastid. The protein localises to the chloroplast. This chain is Small ribosomal subunit protein uS2c (rps2), found in Ceratophyllum demersum (Rigid hornwort).